We begin with the raw amino-acid sequence, 97 residues long: Protein RADIALIS-like 6 (97 aa).

Residues 7–59 (SSISPWTFSQNKMFERALAVYDKDTPDRWHNVAKAVGGKTVEEVKRHYDILVE) form the SANT domain.

As to expression, expressed in the micropylar endosperm surrounding globular-stage embryos but no expression was detected elsewhere, including floral tissues.

It localises to the nucleus. Its function is as follows. Probable transcription factor. The sequence is that of Protein RADIALIS-like 6 (RL6) from Arabidopsis thaliana (Mouse-ear cress).